A 420-amino-acid chain; its full sequence is Transcription factor IIIB 50 kDa subunit (420 aa).

The TFIIB-type zinc finger occupies 3 to 36; it reads NGSRCPDCGSSELVEDSHYSQSQLVCSDCGCVVT. Zn(2+) is bound by residues cysteine 7, cysteine 10, cysteine 28, and cysteine 31. A run of 2 repeats spans residues 72–157 and 173–249. The interaction with target DNA stretch occupies residues 108–114; that stretch reads AARLQKK. A disordered region spans residues 316-387; sequence TAEVETQQQQ…AVTGDEDISD (72 aa). Over residues 322-336 the composition is skewed to low complexity; it reads QQQQQQQQGQGQGQQ. At serine 354 the chain carries Phosphoserine. Residues 358–364 form a required for the formation of a ternary complex with DNA and TBP; not required for interaction with TBP in the absence of DNA region; that stretch reads LLPPCML. Position 362 is a cysteine sulfenic acid (-SOH) (cysteine 362). Residues 366-420 are required for interaction with TBP and formation of a ternary complex with DNA and TBP; the sequence is PPKRTHTLPPESAVTGDEDISDSEIEQYLRTPQEVRDFERAQAASQAAMRVPNPP.

It belongs to the TFIIB family. Component of TFIIIB complexes. The TFIIIB complex has two activities, alpha and beta. The TFIIIB-alpha activity complex is composed of TBP, BDP1, and a complex containing both BRF2 and at least four stably associated proteins; this complex inhibits the transcription by pol III via its phosphorylation by CK2; YY1 facilitates the TFIIIB-alpha complex formation. Interacts with TBP; this interaction promotes recruitment of BRF2 to TATA box-containing promoters. Interacts with TBP and the BURE sequence (GC-rich sequence downstream from the TATA box) to form a strong ternary complex which is joined by BDP1; this ternary complex stimulates pol III transcription. Forms a trimeric complex composed of TBP, BRF2 and mini-SNAPc complex (SNAP43, SNAP50, and the N-terminal third of SNAP190) on the promoter. Assembly of the TBP-BRF2 complex is stimulated by SNAP190. Interacts with MAF1 and SNAPC4. In terms of processing, in response to oxidative stress, Cys-362 is reversibly oxidized to cysteine sulfenic acid. Oxidation of Cys-362 impairs formation of a ternary complex with TBP and DNA and down-regulates expression of target genes in response to oxidative stress.

The protein resides in the nucleus. Functionally, general activator of RNA polymerase III transcription. Factor exclusively required for RNA polymerase III transcription of genes with promoter elements upstream of the initiation sites. Contributes to the regulation of gene expression; functions as activator in the absence of oxidative stress. Down-regulates expression of target genes in response to oxidative stress. Overexpression protects cells against apoptosis in response to oxidative stress. The protein is Transcription factor IIIB 50 kDa subunit (Brf2) of Mus musculus (Mouse).